The primary structure comprises 74 residues: UPF0435 protein GWCH70_0415 (74 aa).

The protein belongs to the UPF0435 family.

The sequence is that of UPF0435 protein GWCH70_0415 from Geobacillus sp. (strain WCH70).